Here is a 702-residue protein sequence, read N- to C-terminus: MARKTPIERYRNIGISAHIDAGKTTTTERILFYTGVTHKLGEVHDGAATTDWMEQEQERGITITSAAVTCFWKGMDMSYPEHRFNIIDTPGHVDFTIEVERSMRVLDGACMVYCAVGGVQPQSETVWRQANKYKVPRLAFVNKMDRTGANFFKVVDQIKTRLKGNPVPVVVPIGAEDNFKGVVDLLKMKAIIWDEASQGMKFEYTDIPAEVKETAEKWRENMVEAAAEASEELMNKYLDEGTLSEEDIKAGLRARTLAVEIQPMLCGTAFKNKGVQRMLDAVIDYLPSPVDIPDVEGTDPDDEEKKLARKADDGEKFSALAFKLMTDPFVGQLTFVRVYSGVLSKGDTVFNSVKGKKERIGRIVQMMANERIEVDEIRAGDIAACVGLKDVTTGETLSDVDNPIILERMVFPEPVIAQAVEPKSKADQEKMGIALSRLASEDPSFRVRTDEESGQTIIAGMGELHLEIIVDRMKREFNVEANVGKPQVAYRETVRKTVTDVDGKFVRQSGGKGQYGHVVFTLEPQEAGKGFEFVDEIKGGVVPREYIPAVQKGVEEALTSGVLAGYPVVDVKVRLTFGSYHDVDSSEQAFKMAAIFGFKEAARKANPVILEPMMAVEVETPEDYAGTVMGDLSSRRGMVQGMDDMVGGGKAIKAEVPLSEMFGYATQLRSMTQGRATYTMEFKHYAEAPRNVAEAIVAARAK.

The tr-type G domain maps to 8 to 290 (ERYRNIGISA…AVIDYLPSPV (283 aa)). Residues 17 to 24 (AHIDAGKT), 88 to 92 (DTPGH), and 142 to 145 (NKMD) contribute to the GTP site.

This sequence belongs to the TRAFAC class translation factor GTPase superfamily. Classic translation factor GTPase family. EF-G/EF-2 subfamily.

The protein resides in the cytoplasm. Functionally, catalyzes the GTP-dependent ribosomal translocation step during translation elongation. During this step, the ribosome changes from the pre-translocational (PRE) to the post-translocational (POST) state as the newly formed A-site-bound peptidyl-tRNA and P-site-bound deacylated tRNA move to the P and E sites, respectively. Catalyzes the coordinated movement of the two tRNA molecules, the mRNA and conformational changes in the ribosome. The protein is Elongation factor G of Acidovorax sp. (strain JS42).